The primary structure comprises 3644 residues: MVRETRHLWVGNLPENVREEKIIEHFKRYGRVESVKILPKRGSEGGVAAFVDFVDIKSAQKAHNSVNKMGDRDLRTDYNEPGTIPSAARGLDETVSIASRSREVSGFRGSAGGPAYGPPPSLHAREGRYERRLDGASDNRERAYEHSAYGHHERGTGAFDRTRHYDQDYYRDPRERTLQHGLYYTSRSRSPNRFDAHDPRYEPRAREQFTLPSVVHRDIYRDDITREVRGRRPERSYQHSRSRSPHSSQSRNQSPQRLASQASRPTRSPSGSGSRSRSSSSDSISSSSSSSNTDSSDSSSTASDDSPARSVQSAAVPAPTSQLLSSLEKDEPRKSFGIKVQNLPVRSIDTSLKDGLFHEFKKFGKVTSVQIHGASEERYGLVFFRQQEDQEKALTASKGKLFFGMQIEVTAWVGPETESENEFRPLDERIDEFHPKATRTLFIGNLEKTTTYHDLRNIFQRFGEIVDIDIKKVNGVPQYAFLQYCDIASVCKAIKKMDGEYLGNNRLKLGFGKSMPTNCVWLDGLSSNVSDQYLTRHFCRYGPVVKVVFDRLKGMALVLYSEIEDAQAAVKETKGRKIGGNKIKVDFANRESQLAFYHCMEKSGQDMRDFYEMLTERRAGQMAQSKHEDWSADAQSPHKCREERRGSYEYSQERTYYENVRTPGTYPEDSRRDYPARGREFYSEWETYQGEYYDSRYYDEPREYREYRSDPYEQDIREYSYRQRERERERERFESDRDHERRPIERSQSPVHLRRPQSPGVSPAHSERLPSDSERRLYRRSSERSGSCSSVSPPRYDKLEKARLERYTKNEKADKERTFDPERVERERRIVRKEKGEKDKAERQKRKGKAHSPSSQPSETEQENDREQSPEKPRGSTKLSRDRADKEGPAKNRLELVPCVVLTRVKEKEGKVIEHPPPEKLKARLGRDTTKASALDQKPQAAQGEPAKSDPARGKALREKVLPSHAEVGEKEGRTKLRKHLKAEQTPELSALDLEKLEARKRRFADSGLKIEKQKPEIKKTSPETEDTRILLKKQPDTSRDGVLLREGESERKPVRKEILKRESKKTKLERLNSALSPKDCQDPAAVSAGSGSRPSSDVHAGLGELTHGSVETQETQPKKAIPSKPQPKQLQLLENQGPEKEEVRKNYCRPREEPAEHRAGQEKPHGGNAEEKLGIDIDHTQSYRKQMEQSRRKQRMEMEIAKAEKFGSPKKDVDDYERRSLVHEVGKPPQDVTDDSPPSKKRRTDHVDFDICTKRERNYRSSRQISEDSERTSCSPSVRHGSFHDDDDPRGSPRLVSVKGSPKGDEKGLPYPNAAVRDDPLKCNPYDSGKREQTADTAKIKLSVLNSEGEPSRWDPPMKQDPSRFDVSFPNSVIKRDSLRKRSVRDLEPGEVPSDSDEDAEHRSQSPRASSFYDSPRLSFLLRDRDQKLRERDERLASSLERNKFYSFALDKTITPDTKALLERAKSLSSSREENWSFLDWDSRFANFRNNKDKEKVDSAPRPIPSWYMKKKKIRTDSEGKLDDKKDERREEEQERQELFASRFLHSSIFEQDSKRLQHLERKSEESDFPPGRLYGRQASEGANSTSDSVQEPVVLFHSRFMELTRMQQKEKEKDQKPKEAEKQEEPETHPKTPEPAAETKEPEPKAPVSAGLPAVTITVVTPEPASSAPEKAEEAAEAPSPAGEKPAEPAPVSEETKLVSEPVSVPVEQPRQSDVPPGEDSRDSQDSAALAPSAPQESAATDAVPCVNAEPLTPGTTVSQVESSVDPKPSSPQPLSKLTQRSEEAEEGKVEKPDTTPSTEPDATQNAGVASEAQPPASEDVEANPPVAAKDRKTNKSKRSKTSVQAAAASVVEKPVTRKSERIDREKLKRSSSPRGEAQKLLELKMEAEKITRTASKSSGGDTEHPEPSLPLSRSRRRNVRSVYATMTDHESRSPAKEPVEQPRVTRKRLERELQEAVVPPTTPRRGRPPKTRRRAEEDGEHERKEPAETPRPAEGWRSPRSQKSAAAAGPQGKRGRNEQKVEAAAEAGAQASTREGNPKSRGEREAASEPKRDRRDPSTDKSGPDTFPVEVLERKPPEKTYKSKRGRARSTRSGMDRAAHQRSLEMAARAAGQAADKEAGPAAASPQESESPQKGSGSSPQLANNPADPDREAEEESASASTAPPEGTQLARQIELEQAVQNIAKLPEPSAAAASKGTATATATAASEEPAPEHGHKPAHQASETELAAAIGSIISDASGEPENFSAPPSVPPGSQTHPREGMEPGLHEAESGILETGTATESSAPQVSALDPPEGSADTKETRGNSGDSVQEAKGSKAEVTPPRKDKGRQKTTRRRKRNANKKVVAITETRASEAEQTQSESPAAEEATAATPEAPQEEKPSEKPPSPPAECTFDPSKTPPAESLSQENSAAEKTPCKAPVLPALPPLSQPALMDDGPQARFKVHSIIESDPVTPPSDSGIPPPTIPLVTIAKLPPPVIPGGVPHQSPPPKVTEWITRQEEPRAQSTPSPALPPDTKASDMDTSSSTLRKILMDPKYVSATGVTSTSVTTAIAEPVSAPCLQEAPAPPCDPKHPPLEGVSAAAVPNADTQASEVPVAADKEKVAPVIAPKITSVISRMPVSIDLENSQKITLAKPAPQTLTGLVSALTGLVNVSLVPVNALKGPVKGSVATLKGLVSTPAGPVNLLKGPVNVLTGPVNVLTTPVSATVGTVNAAPGPVTAACGVTATTGTAAVTGAVTAPAAKGKQRASSNENSRFHPGSMSVIDDRPADTGSGAGLRVNTSEGVVLLSYSGQKTEGPQRISAKISQIPPASAMDIEFQQSVSKSQVKADSITPTQSAPKGPQTPSAFANVAAHSTLVLTAQTYNASPVISSVKTDRPSLEKPEPIHLSVSTPVTQGGTVKVLTQGINTPPVLVHNQLVLTPSIVTTNKKLADPVTLKIETKVLQPANLGPTLTPHHPPALPSKLPAEVNHVPSGPSTPADRTIAHLATPKPDTHSPRPTGPTPGLFPRPCHPSSTTSTALSTNATVMLAAGIPVPQFISSIHPEQSVIMPPHSITQTVSLGHLSQGEVRMSTPTLPSITYSIRPETLHSPRAPLQPQQIEARAPQRVGTPQPATTGVPALATQHPPEEEVHYHLPVARAAAPVQSEVLVMQSEYRLHPYTVPRDVRIMVHPHVTAVSEQPRATEGVVKVPPANKAPQQLVKEAVKTSDAKAVPAPAPVPVPVPVPTPAPPPHGEARILTVTPSSQLQGLPLTPPVVVTHGVQIVHSSGELFQEYRYGDVRTYHAPAQQLTHTQFPVASSISLASRTKTSAQVPPEGEPLQSTQSAQPAPSTQATQPIPPAPPCQPSQLSQPAQPPSGKIPQVSQEAKGTQTGGVEQTRLPAIPTNRPSEPHAQLQRAPVETAQPAHPSPVSVSMKPDLPSPLSSQAAPKQPLFVPANSGPSTPPGLALPHAEVQPAPKQESSPHGTPQRPVDMVQLLKKYPIVWQGLLALKNDTAAVQLHFVSGNNVLAHRSLPLSEGGPPLRIAQRMRLEASQLEGVARRMTVETDYCLLLALPCGRDQEDVVSQTESLKAAFITYLQAKQAAGIINVPNPGSNQPAYVLQIFPPCEFSESHLSRLAPDLLASISNISPHLMIVIASV.

Residues 1-574 mediate DNA binding; the sequence is MVRETRHLWV…DAQAAVKETK (574 aa). In terms of domain architecture, RRM 1 spans 6-81; it reads RHLWVGNLPE…RDLRTDYNEP (76 aa). At Ser99 the chain carries Phosphoserine. Disordered stretches follow at residues 103 to 124, 170 to 209, and 225 to 331; these read EVSG…SLHA, YRDP…REQF, and TREV…EKDE. Residue Arg108 is modified to Omega-N-methylarginine. Phosphoserine is present on residues Ser188 and Ser190. Composition is skewed to basic and acidic residues over residues 192 to 207 and 225 to 237; these read NRFD…RARE and TREV…ERSY. The segment covering 245-310 has biased composition (low complexity); sequence PHSSQSRNQS…TASDDSPARS (66 aa). Ser310 carries the post-translational modification Phosphoserine. 3 RRM domains span residues 336-416, 439-514, and 518-590; these read FGIK…VGPE, RTLF…FGKS, and NCVW…FANR. Positions 559–575 form a coiled coil; the sequence is LYSEIEDAQAAVKETKG. Disordered stretches follow at residues 625 to 673 and 716 to 1413; these read SKHE…SRRD and IREY…ASSF. Composition is skewed to basic and acidic residues over residues 639-656 and 716-745; these read KCRE…ERTY and IREY…RPIE. Ser647 is subject to Phosphoserine. Phosphoserine is present on residues Ser747, Ser749, Ser758, and Ser762. Over residues 765–783 the composition is skewed to basic and acidic residues; it reads HSERLPSDSERRLYRRSSE. Residues 784–794 show a composition bias toward low complexity; it reads RSGSCSSVSPP. Ser792 bears the Phosphoserine mark. Over residues 795-842 the composition is skewed to basic and acidic residues; that stretch reads RYDKLEKARLERYTKNEKADKERTFDPERVERERRIVRKEKGEKDKAE. Residues 822–850 are a coiled coil; that stretch reads ERVERERRIVRKEKGEKDKAERQKRKGKA. Phosphoserine is present on residues Ser852, Ser855, and Ser869. Composition is skewed to basic and acidic residues over residues 863–894, 904–930, 947–975, and 1009–1071; these read ENDR…KNRL, RVKE…RDTT, AKSD…EGRT, and LKIE…KLER. Phosphoserine is present on residues Ser1077 and Ser1183. The segment covering 1138-1227 has biased composition (basic and acidic residues); it reads GPEKEEVRKN…ERRSLVHEVG (90 aa). Residues 1185–1206 adopt a coiled-coil conformation; it reads RKQMEQSRRKQRMEMEIAKAEK. Phosphoserine occurs at positions 1209, 1237, 1267, 1276, 1283, 1293, 1298, 1302, and 1348. Residues 1246 to 1272 show a composition bias toward basic and acidic residues; it reads DHVDFDICTKRERNYRSSRQISEDSER. The segment covering 1283–1292 has biased composition (basic and acidic residues); that stretch reads SFHDDDDPRG. Residues 1351–1365 show a composition bias toward basic and acidic residues; sequence EPSRWDPPMKQDPSR. Phosphoserine is present on residues Ser1395 and Ser1397. Thr1454 and Thr1456 each carry phosphothreonine. Disordered regions lie at residues 1494 to 1538 and 1557 to 2447; these read DKEK…QERQ and RLQH…ARFK. Positions 1509 to 1544 form a coiled coil; that stretch reads YMKKKKIRTDSEGKLDDKKDERREEEQERQELFASR. 2 stretches are compositionally biased toward basic and acidic residues: residues 1516 to 1538 and 1557 to 1567; these read RTDS…QERQ and RLQHLERKSEE. Over residues 1582-1591 the composition is skewed to polar residues; the sequence is EGANSTSDSV. Over residues 1601 to 1646 the composition is skewed to basic and acidic residues; the sequence is RFMELTRMQQKEKEKDQKPKEAEKQEEPETHPKTPEPAAETKEPEP. Residues 1607–1627 adopt a coiled-coil conformation; it reads RMQQKEKEKDQKPKEAEKQEE. Thr1634 bears the Phosphothreonine mark. Over residues 1701 to 1710 the composition is skewed to low complexity; it reads VSEPVSVPVE. Residues 1756-1765 are compositionally biased toward polar residues; sequence PGTTVSQVES. Residues 1782–1796 show a composition bias toward basic and acidic residues; the sequence is QRSEEAEEGKVEKPD. The span at 1797-1810 shows a compositional bias: polar residues; that stretch reads TTPSTEPDATQNAG. Thr1844 carries the post-translational modification Phosphothreonine. 2 stretches are compositionally biased toward basic and acidic residues: residues 1857 to 1871 and 1879 to 1894; these read PVTR…EKLK and EAQK…EKIT. Residues Ser1915 and Ser1936 each carry the phosphoserine modification. Residues 1930 to 1943 are compositionally biased toward basic and acidic residues; the sequence is TDHESRSPAKEPVE. Position 1965 is a phosphothreonine (Thr1965). Residues 1967–1976 show a composition bias toward basic residues; sequence RRGRPPKTRR. Basic and acidic residues-rich tracts occupy residues 1977-1991, 2039-2066, 2074-2084, and 2097-2106; these read RAEE…EPAE, GNPK…DKSG, VLERKPPEKTY, and GMDRAAHQRS. Residues Ser2128 and Ser2134 each carry the phosphoserine modification. The segment covering 2129 to 2147 has biased composition (polar residues); sequence PQESESPQKGSGSSPQLAN. An interaction with MSX2 region spans residues 2138-2462; sequence GSGSSPQLAN…ESDPVTPPSD (325 aa). At Thr2171 the chain carries Phosphothreonine. Low complexity-rich tracts occupy residues 2191 to 2212 and 2231 to 2242; these read EPSA…ASEE and AAAIGSIISDAS. The 489-residue stretch at 2216–2704 folds into the RID domain; the sequence is EHGHKPAHQA…NVLTGPVNVL (489 aa). The span at 2261–2274 shows a compositional bias: basic and acidic residues; that stretch reads HPREGMEPGLHEAE. The segment covering 2281 to 2290 has biased composition (polar residues); that stretch reads GTATESSAPQ. Positions 2318–2329 are enriched in basic and acidic residues; that stretch reads KGSKAEVTPPRK. The segment covering 2330–2345 has biased composition (basic residues); it reads DKGRQKTTRRRKRNAN. Residues 2359–2379 are compositionally biased toward low complexity; it reads AEQTQSESPAAEEATAATPEA. Position 2366 is a phosphoserine (Ser2366). Thr2419 is modified (phosphothreonine). A phosphoserine mark is found at Ser2450 and Ser2454. Disordered regions lie at residues 2453-2472, 2481-2528, 2745-2781, and 2829-2849; these read ESDP…TIPL, PVIP…MDTS, AAKG…GAGL, and SQVK…PQTP. A Phosphothreonine modification is found at Thr2458. Ser2491 is subject to Phosphoserine. An interaction with RBPSUH region spans residues 2706–2845; sequence TPVSATVGTV…ITPTQSAPKG (140 aa). Phosphothreonine is present on residues Thr2913 and Thr2925. A disordered region spans residues 2974-3023; sequence NHVPSGPSTPADRTIAHLATPKPDTHSPRPTGPTPGLFPRPCHPSSTTST. Residues 3003-3015 show a composition bias toward pro residues; that stretch reads PTGPTPGLFPRPC. 2 positions are modified to asymmetric dimethylarginine: Arg3088 and Arg3096. The disordered stretch occupies residues 3310–3473; it reads RTKTSAQVPP…QESSPHGTPQ (164 aa). Over residues 3323–3340 the composition is skewed to low complexity; sequence PLQSTQSAQPAPSTQATQ. Polar residues predominate over residues 3366–3379; it reads QVSQEAKGTQTGGV. Ser3413 bears the Phosphoserine mark. Positions 3478 to 3644 constitute an SPOC domain; sequence MVQLLKKYPI…PHLMIVIASV (167 aa).

Belongs to the RRM Spen family. In terms of assembly, interacts with NCOR2, HDAC1, HDAC2, RBBP4, MBD3 and MTA1L1. Interacts with the nuclear receptors RAR and PPARD. Interacts with RAR in absence of ligand. Binds to the steroid receptor RNA coactivator SRA. Interacts with MSX2. Interacts with RBPSUH; this interaction may prevent the interaction between RBPSUH and NOTCH1. Binds to HIPK3. As to expression, highly expressed in testis. Expressed at lower level in brain, lung, spleen, liver and kidney. Weakly expressed in cardiac and skeletal muscles and ovary. In spleen, it is expressed in follicular B-cells, while it is weakly expressed in marginal zone B-cells.

The protein resides in the nucleus. May serve as a nuclear matrix platform that organizes and integrates transcriptional responses. In osteoblasts, supports transcription activation: synergizes with RUNX2 to enhance FGFR2-mediated activation of the osteocalcin FGF-responsive element (OCFRE). Has also been shown to be an essential corepressor protein, which probably regulates different key pathways, such as the Notch pathway. Negative regulator of the Notch pathway via its interaction with RBPSUH, which prevents the association between NOTCH1 and RBPSUH, and therefore suppresses the transactivation activity of Notch signaling. Blocks the differentiation of precursor B-cells into marginal zone B-cells. Probably represses transcription via the recruitment of large complexes containing histone deacetylase proteins. May bind both to DNA and RNA. The polypeptide is Msx2-interacting protein (Spen) (Mus musculus (Mouse)).